The sequence spans 230 residues: Ion-translocating oxidoreductase complex subunit E (230 aa).

The next 6 helical transmembrane spans lie at 18–38, 39–59, 63–83, 86–106, 125–145, and 182–202; these read ALVQLLGLCPLLAVTSTATNA, LGLGLATTLVLTLTNLTVSAL, TPAEIRIPIYVMIIASVVSAV, LINAYAFGLYQSLGIFIPLIV, WLSALDGFSIGMGATGAMFVL, and PFLLAMLPPGAFIGLGLMLAV.

It belongs to the NqrDE/RnfAE family. As to quaternary structure, the complex is composed of six subunits: RsxA, RsxB, RsxC, RsxD, RsxE and RsxG.

Its subcellular location is the cell inner membrane. In terms of biological role, part of a membrane-bound complex that couples electron transfer with translocation of ions across the membrane. Required to maintain the reduced state of SoxR. The sequence is that of Ion-translocating oxidoreductase complex subunit E from Salmonella arizonae (strain ATCC BAA-731 / CDC346-86 / RSK2980).